Here is a 225-residue protein sequence, read N- to C-terminus: Protein YIP4 (225 aa).

A phosphoserine mark is found at Ser-27 and Ser-28. 5 helical membrane-spanning segments follow: residues 91–111, 118–138, 154–176, 180–199, and 205–225; these read WDLW…ALST, SVFT…SLNI, LGYS…LIFI, VIVA…LQNS, and KLLA…IIFL.

It belongs to the YIP1 family. In terms of assembly, interacts with the YIP1 family members yip1 and yip5, and with several Rab GTPases.

The protein resides in the membrane. Its function is as follows. May be involved in proper membrane localization of Rab GTPases. This Schizosaccharomyces pombe (strain 972 / ATCC 24843) (Fission yeast) protein is Protein YIP4.